The following is a 294-amino-acid chain: HTH-type transcriptional activator AmpR (294 aa).

The 58-residue stretch at 6 to 63 (IPLNSLRAFEAAARQLSFTKAAIELNVTHAAISQQVKALEQRLNCRLFIRISRGLVLT) folds into the HTH lysR-type domain. The H-T-H motif DNA-binding region spans 23-42 (FTKAAIELNVTHAAISQQVK).

It belongs to the LysR transcriptional regulatory family.

The protein localises to the cytoplasm. In terms of biological role, this protein is a positive regulator of gene expression of beta-lactamase (AmpC). This Yersinia enterocolitica protein is HTH-type transcriptional activator AmpR (ampR).